The sequence spans 283 residues: Homeobox protein Hox-C12b (283 aa).

Positions 215–274 (TRKKRKPYSKLQLNELEGEFILNEFITRQRRRELSDRLNLTDQQVKIWFQNRRMKKKRLL) form a DNA-binding region, homeobox.

Belongs to the Abd-B homeobox family.

It localises to the nucleus. Sequence-specific transcription factor which is part of a developmental regulatory system that provides cells with specific positional identities on the anterior-posterior axis. This is Homeobox protein Hox-C12b (hoxc12b) from Danio rerio (Zebrafish).